The primary structure comprises 379 residues: 23S rRNA (uracil(747)-C(5))-methyltransferase RlmC (379 aa).

Cys3, Cys11, Cys14, and Cys87 together coordinate [4Fe-4S] cluster. S-adenosyl-L-methionine is bound by residues Gln212, Phe241, Glu262, and Asn309. Cys336 acts as the Nucleophile in catalysis.

The protein belongs to the class I-like SAM-binding methyltransferase superfamily. RNA M5U methyltransferase family. RlmC subfamily.

It carries out the reaction uridine(747) in 23S rRNA + S-adenosyl-L-methionine = 5-methyluridine(747) in 23S rRNA + S-adenosyl-L-homocysteine + H(+). Its function is as follows. Catalyzes the formation of 5-methyl-uridine at position 747 (m5U747) in 23S rRNA. The sequence is that of 23S rRNA (uracil(747)-C(5))-methyltransferase RlmC from Shewanella loihica (strain ATCC BAA-1088 / PV-4).